Here is a 388-residue protein sequence, read N- to C-terminus: MGSLSPLEPLFTPLRIGAFALQHRVVQAPCTRMRSTKESDGIWVPNDLNVEYYAQRASKGGLMLSEATPISRDAAGYPGVPGIFTPSQIEGWRKVTNAVHTKGGLILCQLWHVGRATTPGFLGGKTPLAPSDIPISGKALDGNVYADAPPRPMTVDEIKEVVLEYAAASKRAIEAGFDGVEIHGGNGYLLDQFLHDNVNNRTDAYGGSIENRSRIVLEIISAVTEAIGAERVGIRLSPYNYFQDTRDSNPQKHWGYLCTQIASLPESSRPAYVHMIEPRFDEILDESEKISALETMQEVVKPSLDGLRSSLKKGGVSFIAAGNFKPENAGEKLITDSADAIAFGRLFISNPDLPRRLKEGIELTKYDRSTFYGATPPEKGYTDYPFAQ.

It belongs to the NADH:flavin oxidoreductase/NADH oxidase family. The cofactor is FMN.

Functionally, flavin oxidoreductase, part of the hnx cluster involved in the purine degradation. The nicotinate hydroxylase hnxS accepts nicotinate as a substrate and catalyzes the first step of nicotinate catabolism. The major facilitator-type transporters hxnP and hxnZ are probably involved in the uptake of nicotinate-derived metabolites, and the oxidoreductases hxnT and hxnY in the further metabolism of 6-OH nicotinic acid. In Emericella nidulans (strain FGSC A4 / ATCC 38163 / CBS 112.46 / NRRL 194 / M139) (Aspergillus nidulans), this protein is Flavin oxidoreductase hxnT.